Here is a 360-residue protein sequence, read N- to C-terminus: Cuticle collagen dpy-2 (360 aa).

3 triple-helical region regions span residues 123 to 152 (GERG…PGTT), 174 to 230 (GPRG…KGRT), and 238 to 303 (GPPG…PGTC). 2 disordered regions span residues 127-158 (PSGD…ASCI) and 174-360 (GPRG…IRKW). Positions 189-198 (GEYGIGGRPG) are enriched in gly residues. Low complexity predominate over residues 242-258 (DSGLPGPWGPPGSAGMP). Residues 273 to 288 (PGPPGAPGPGGMPGPN) are compositionally biased toward pro residues.

The protein belongs to the cuticular collagen family. As to quaternary structure, collagen polypeptide chains are complexed within the cuticle by disulfide bonds and other types of covalent cross-links.

In terms of biological role, nematode cuticles are composed largely of collagen-like proteins. The cuticle functions both as an exoskeleton and as a barrier to protect the worm from its environment. Mutations in dpy-2 affects the body shape. The protein is Cuticle collagen dpy-2 (dpy-2) of Caenorhabditis elegans.